The sequence spans 119 residues: V-type proton ATPase subunit F (119 aa).

It belongs to the V-ATPase F subunit family. V-ATPase is a heteromultimeric enzyme made up of two complexes: the ATP-hydrolytic V1 complex and the proton translocation V0 complex. The V1 complex consists of three catalytic AB heterodimers that form a heterohexamer, three peripheral stalks each consisting of EG heterodimers, one central rotor including subunits D and F, and the regulatory subunits C and H. The proton translocation complex V0 consists of the proton transport subunit a, a ring of proteolipid subunits c9c'', rotary subunit d, subunits e and f, and the accessory subunits ATP6AP1/Ac45 and ATP6AP2/PRR.

It localises to the cytoplasmic vesicle. It is found in the secretory vesicle. Its subcellular location is the synaptic vesicle membrane. The protein localises to the clathrin-coated vesicle membrane. In terms of biological role, subunit of the V1 complex of vacuolar(H+)-ATPase (V-ATPase), a multisubunit enzyme composed of a peripheral complex (V1) that hydrolyzes ATP and a membrane integral complex (V0) that translocates protons. V-ATPase is responsible for acidifying and maintaining the pH of intracellular compartments and in some cell types, is targeted to the plasma membrane, where it is responsible for acidifying the extracellular environment. The chain is V-type proton ATPase subunit F (ATP6V1F) from Homo sapiens (Human).